Consider the following 663-residue polypeptide: Probable E3 ubiquitin ligase complex SCF subunit sconB (663 aa).

Polar residues-rich tracts occupy residues 1 to 15 (MDAD…QSAV) and 56 to 77 (TADT…TPTE). The tract at residues 1–80 (MDADNSTLPT…FNSTPTEGNI (80 aa)) is disordered. Residues 195 to 241 (IDFVTALPPEISFKILSYLDTASLCSAAQVSHSWRALADDDVVWHRM) form the F-box domain. WD repeat units follow at residues 320–359 (GHTN…RTLR), 361–399 (HEST…STYT), 400–437 (GHQG…TRIL), and 439–480 (GHAD…HSYA). The span at 503–522 (NCADDRSDRLSGSESPDHRG) shows a compositional bias: basic and acidic residues. A disordered region spans residues 503–547 (NCADDRSDRLSGSESPDHRGSHGYRSNNAPDQQPNTSAPPTEPMS). Positions 526-541 (YRSNNAPDQQPNTSAP) are enriched in polar residues. WD repeat units follow at residues 544-589 (EPMS…CLRT), 592-629 (GHIE…CERT), and 632-663 (GHRG…SFKA).

Belongs to the WD repeat MET30/SCONB/SCON-2 family. As to quaternary structure, component of the SCF(sconB) E3 ubiquitin ligase complex.

It participates in protein modification; protein ubiquitination. Functionally, component of the SCF(sconB) E3 ubiquitin ligase complex involved in the regulation of sulfur metabolite repression, probably by mediating the inactivation or degradation of the metR transcription factor. This Arthroderma benhamiae (strain ATCC MYA-4681 / CBS 112371) (Trichophyton mentagrophytes) protein is Probable E3 ubiquitin ligase complex SCF subunit sconB (sconB).